The primary structure comprises 1357 residues: Kinectin (1357 aa).

The Cytoplasmic segment spans residues 1 to 6; that stretch reads MEFYES. The chain crosses the membrane as a helical; Signal-anchor for type II membrane protein span at residues 7–29; the sequence is AYFIVLIPSIVITVIFLFFWLFM. The Lumenal portion of the chain corresponds to 30–1357; the sequence is KETLYDEVLA…KEKEHYQVLE (1328 aa). Disordered regions lie at residues 48 to 81 and 103 to 218; these read IPTKTDKKKAEKKKNKKKEIQNGNLHESDSESVP and NVVE…KQKT. Ser75 bears the Phosphoserine; by FAM20C mark. Ser77 bears the Phosphoserine mark. A compositionally biased stretch (basic and acidic residues) spans 121 to 135; that stretch reads QKPVLEEQVIKESDA. Phosphothreonine is present on Thr153. A Phosphoserine modification is found at Ser156. Over residues 161–171 the composition is skewed to basic residues; it reads SKKKPGQKKSK. Residues Asn172, Asn435, Asn772, Asn904, and Asn1055 are each glycosylated (N-linked (GlcNAc...) asparagine). Residues 172–182 show a composition bias toward basic and acidic residues; sequence NGSDDQDKKVE. The stretch at 330 to 1356 forms a coiled coil; that stretch reads LIHQLQEKDK…TKEKEHYQVL (1027 aa). Residue Ser1084 is modified to Phosphoserine. Residues Asn1088 and Asn1263 are each glycosylated (N-linked (GlcNAc...) asparagine). Ser1313 carries the phosphoserine modification. Residue Asn1329 is glycosylated (N-linked (GlcNAc...) asparagine).

It belongs to the kinectin family. In terms of assembly, parallel homodimers formed between the membrane-bound and the cytosolic form, and also between 2 cytosolic forms. As to expression, high levels in peripheral blood lymphocytes, testis and ovary, lower levels in spleen, thymus, prostate, small intestine and colon.

The protein resides in the endoplasmic reticulum membrane. In terms of biological role, receptor for kinesin thus involved in kinesin-driven vesicle motility. Accumulates in integrin-based adhesion complexes (IAC) upon integrin aggregation by fibronectin. This chain is Kinectin (KTN1), found in Homo sapiens (Human).